The sequence spans 177 residues: ATP synthase subunit delta (177 aa).

This sequence belongs to the ATPase delta chain family. F-type ATPases have 2 components, F(1) - the catalytic core - and F(0) - the membrane proton channel. F(1) has five subunits: alpha(3), beta(3), gamma(1), delta(1), epsilon(1). F(0) has three main subunits: a(1), b(2) and c(10-14). The alpha and beta chains form an alternating ring which encloses part of the gamma chain. F(1) is attached to F(0) by a central stalk formed by the gamma and epsilon chains, while a peripheral stalk is formed by the delta and b chains.

It localises to the cell inner membrane. F(1)F(0) ATP synthase produces ATP from ADP in the presence of a proton or sodium gradient. F-type ATPases consist of two structural domains, F(1) containing the extramembraneous catalytic core and F(0) containing the membrane proton channel, linked together by a central stalk and a peripheral stalk. During catalysis, ATP synthesis in the catalytic domain of F(1) is coupled via a rotary mechanism of the central stalk subunits to proton translocation. Its function is as follows. This protein is part of the stalk that links CF(0) to CF(1). It either transmits conformational changes from CF(0) to CF(1) or is implicated in proton conduction. The sequence is that of ATP synthase subunit delta from Salmonella agona (strain SL483).